The following is a 119-amino-acid chain: MEAKAIARHVRVTPRKARRMVDLIRGKKATEAVTILKFAPQAAALPVRKTLESAIANARVKADKAGEPFRENDLYIKETYVDEGVTLKRFRARAQGRAARINKRTSHITVVVANKEGAR.

The protein belongs to the universal ribosomal protein uL22 family. Part of the 50S ribosomal subunit.

Functionally, this protein binds specifically to 23S rRNA; its binding is stimulated by other ribosomal proteins, e.g. L4, L17, and L20. It is important during the early stages of 50S assembly. It makes multiple contacts with different domains of the 23S rRNA in the assembled 50S subunit and ribosome. In terms of biological role, the globular domain of the protein is located near the polypeptide exit tunnel on the outside of the subunit, while an extended beta-hairpin is found that lines the wall of the exit tunnel in the center of the 70S ribosome. This chain is Large ribosomal subunit protein uL22, found in Bifidobacterium longum (strain DJO10A).